We begin with the raw amino-acid sequence, 196 residues long: Pyridoxal 5'-phosphate synthase subunit PdxT (196 aa).

47 to 49 lines the L-glutamine pocket; it reads GES. C79 serves as the catalytic Nucleophile. L-glutamine contacts are provided by residues R106 and 134 to 135; that span reads IR. Residues H170 and E172 each act as charge relay system in the active site.

Belongs to the glutaminase PdxT/SNO family. In the presence of PdxS, forms a dodecamer of heterodimers. Only shows activity in the heterodimer.

The enzyme catalyses aldehydo-D-ribose 5-phosphate + D-glyceraldehyde 3-phosphate + L-glutamine = pyridoxal 5'-phosphate + L-glutamate + phosphate + 3 H2O + H(+). It catalyses the reaction L-glutamine + H2O = L-glutamate + NH4(+). Its pathway is cofactor biosynthesis; pyridoxal 5'-phosphate biosynthesis. In terms of biological role, catalyzes the hydrolysis of glutamine to glutamate and ammonia as part of the biosynthesis of pyridoxal 5'-phosphate. The resulting ammonia molecule is channeled to the active site of PdxS. The chain is Pyridoxal 5'-phosphate synthase subunit PdxT from Bacillus cereus (strain B4264).